A 158-amino-acid chain; its full sequence is 2S seed storage albumin protein (158 aa).

An N-terminal signal peptide occupies residues 1–21; sequence MTKFTILLISLLFCIAHTCSA. Positions 54–56 match the Cell attachment site motif; that stretch reads RGD. A propeptide spanning residues 65–81 is cleaved from the precursor; sequence NHILRTMRGRINYIRRN.

This sequence belongs to the 2S seed storage albumins family. As to quaternary structure, the protein consists of two chains linked by 2 disulfide bonds. Expressed in cotyledons. Maximal expression in parenchyma cells undergoing DNA endoreduplication and cell expansion but not in actively dividing cells of the cotyledon.

Its function is as follows. This is a 2S seed storage protein. Functionally, binds to mammalian chromatin, preventing the normal formation of the kinetochore complex in the centromere and leading to the disruption of mitosis. This Glycine max (Soybean) protein is 2S seed storage albumin protein.